The sequence spans 554 residues: Apyrase (554 aa).

The first 21 residues, 1 to 21 (MFKITVFIYVLQLILPSKVHS), serve as a signal peptide directing secretion. Asp43, His45, Asp92, Asn124, His224, and His248 together coordinate a divalent metal cation. Residues Arg358, Asn394, Arg399, Phe418, Phe504, and Asp510 each coordinate AMP.

Belongs to the 5'-nucleotidase family. The cofactor is a divalent metal cation. In terms of tissue distribution, salivary gland (at protein level).

The protein localises to the secreted. It carries out the reaction a ribonucleoside 5'-triphosphate + 2 H2O = a ribonucleoside 5'-phosphate + 2 phosphate + 2 H(+). In terms of biological role, facilitates hematophagy by inhibiting ADP-dependent platelet aggregation in the host. Cleaves adenosine triphosphate (ATP) and adenosine diphosphate (ADP) to adenosine monophosphate (AMP) and inorganic phosphate. Shows potential for antithrombotic activity. Can induce basophil activation. May reduce probing time by facilitating the speed of locating blood. The protein is Apyrase of Tabanus yao (Horsefly).